We begin with the raw amino-acid sequence, 1115 residues long: PAN2-PAN3 deadenylation complex catalytic subunit PAN2 (1115 aa).

5 WD repeats span residues asparagine 27–tyrosine 66, alanine 112–aspartate 153, leucine 155–serine 194, alanine 197–arginine 236, and histidine 295–phenylalanine 334. The segment at threonine 337–tyrosine 473 is linker. Residues glutamate 474 to alanine 855 enclose the USP domain. Residues cysteine 660, histidine 662, cysteine 713, and cysteine 716 each contribute to the Zn(2+) site. The Exonuclease domain maps to valine 907–tyrosine 1079. Residues aspartate 910, glutamate 912, aspartate 1020, and aspartate 1071 each contribute to the a divalent metal cation site.

This sequence belongs to the peptidase C19 family. PAN2 subfamily. Forms a heterotrimer with an asymmetric homodimer of the regulatory subunit PAN3 to form the poly(A)-nuclease (PAN) deadenylation complex. It depends on a divalent metal cation as a cofactor.

The protein localises to the cytoplasm. It catalyses the reaction Exonucleolytic cleavage of poly(A) to 5'-AMP.. With respect to regulation, positively regulated by the regulatory subunit PAN3. Negatively regulated by PAB1-binding protein PBP1. Inhibited under stress conditions. Inhibition of deadenylation under stress increases mRNA stability, which may be a mechanism to retain the majority of the cytoplasmic pool of mRNAs for later reuse and recovery from stress. In terms of biological role, catalytic subunit of the poly(A)-nuclease (PAN) deadenylation complex, one of two cytoplasmic mRNA deadenylases involved in mRNA turnover. PAN specifically shortens poly(A) tails of RNA and the activity is stimulated by poly(A)-binding protein PAB1. PAN deadenylation is followed by rapid degradation of the shortened mRNA tails by the CCR4-NOT complex. Deadenylated mRNAs are then degraded by two alternative mechanisms, namely exosome-mediated 3'-5' exonucleolytic degradation, or deadenylation-dependent mRNA decaping by DCP1-DCP2 and subsequent 5'-3' exonucleolytic degradation by XRN1. May also be involved in post-transcriptional maturation of mRNA poly(A) tails, trimming the tails from their synthesized length to the slightly shorter, apparently messenger-specific length found on newly exported mRNAs. PAN cooperates with protein kinase DUN1 in the regulation of RAD5 mRNA levels and cell survival in response to replicational stress. This chain is PAN2-PAN3 deadenylation complex catalytic subunit PAN2, found in Saccharomyces cerevisiae (strain ATCC 204508 / S288c) (Baker's yeast).